Reading from the N-terminus, the 566-residue chain is Putative ABC transporter ATP-binding protein lp_0149 (566 aa).

ABC transporter domains are found at residues 6-247 (ISFK…GLRE) and 302-536 (LAIE…ASLA). ATP-binding positions include 40–47 (GPSGSGKS) and 335–342 (GQNGTGKS).

This sequence belongs to the ABC transporter superfamily.

Its subcellular location is the cell membrane. Probably part of an ABC transporter complex. Responsible for energy coupling to the transport system. The protein is Putative ABC transporter ATP-binding protein lp_0149 of Lactiplantibacillus plantarum (strain ATCC BAA-793 / NCIMB 8826 / WCFS1) (Lactobacillus plantarum).